The primary structure comprises 176 residues: bZIP transcription factor 8 (176 aa).

The tract at residues 44 to 101 (PNTSGGSDESMSDGSKIDPKRSPKYLEKRMKNNEAAKKSRASRKHREQKNQTENELLK) is disordered. A compositionally biased stretch (low complexity) spans 47–57 (SGGSDESMSDG). The segment covering 58-80 (SKIDPKRSPKYLEKRMKNNEAAK) has biased composition (basic and acidic residues). The bZIP domain occupies 65–128 (SPKYLEKRMK…AQMQITIRDM (64 aa)). The segment at 67 to 92 (KYLEKRMKNNEAAKKSRASRKHREQK) is basic motif. Positions 81–90 (KSRASRKHRE) are enriched in basic residues. The segment covering 91–101 (QKNQTENELLK) has biased composition (basic and acidic residues). A leucine-zipper region spans residues 100–107 (LKRKNAAL).

Belongs to the bZIP family.

This Caenorhabditis elegans protein is bZIP transcription factor 8 (zip-8).